We begin with the raw amino-acid sequence, 283 residues long: Glutamate racemase (283 aa).

Residues 7 to 8 and 39 to 40 each bind substrate; these read DS and YG. Residue Cys70 is the Proton donor/acceptor of the active site. 71-72 serves as a coordination point for substrate; it reads NT. The active-site Proton donor/acceptor is the Cys206. 207–208 is a substrate binding site; it reads TH.

It belongs to the aspartate/glutamate racemases family.

The catalysed reaction is L-glutamate = D-glutamate. It participates in cell wall biogenesis; peptidoglycan biosynthesis. Functionally, provides the (R)-glutamate required for cell wall biosynthesis. The protein is Glutamate racemase of Phenylobacterium zucineum (strain HLK1).